We begin with the raw amino-acid sequence, 118 residues long: Large ribosomal subunit protein bL19 (118 aa).

It belongs to the bacterial ribosomal protein bL19 family.

Functionally, this protein is located at the 30S-50S ribosomal subunit interface and may play a role in the structure and function of the aminoacyl-tRNA binding site. This Lactiplantibacillus plantarum (strain ATCC BAA-793 / NCIMB 8826 / WCFS1) (Lactobacillus plantarum) protein is Large ribosomal subunit protein bL19.